Here is a 234-residue protein sequence, read N- to C-terminus: Peptidyl-prolyl cis-trans isomerase, rhodopsin-specific isozyme (234 aa).

Positions 1-19 (MNILKILILLELIYTCVSG) are cleaved as a signal peptide. One can recognise a PPIase cyclophilin-type domain in the interval 29–187 (YMDVKHQKKP…DPVIIVNCGE (159 aa)). Asparagine 67 carries N-linked (GlcNAc...) asparagine glycosylation. The chain crosses the membrane as a helical span at residues 202 to 222 (ILGWIKAAGLPFCSSFIVLMI).

Belongs to the cyclophilin-type PPIase family. Expressed specifically in photoreceptor cells.

It is found in the membrane. The catalysed reaction is [protein]-peptidylproline (omega=180) = [protein]-peptidylproline (omega=0). Functionally, PPIases accelerate the folding of proteins. It catalyzes the cis-trans isomerization of proline imidic peptide bonds in oligopeptides. Acts on the folding of rhodopsin RH1 and RH2 (but not RH3) and is required for visual transduction. The protein is Peptidyl-prolyl cis-trans isomerase, rhodopsin-specific isozyme (NINAA) of Calliphora vicina (Blue blowfly).